The sequence spans 150 residues: Large-conductance mechanosensitive channel (150 aa).

2 consecutive transmembrane segments (helical) span residues 19–39 (VGII…SDVL) and 85–105 (GIFL…FMLI).

It belongs to the MscL family. In terms of assembly, homopentamer.

Its subcellular location is the cell inner membrane. Its function is as follows. Channel that opens in response to stretch forces in the membrane lipid bilayer. May participate in the regulation of osmotic pressure changes within the cell. This Chlorobium limicola (strain DSM 245 / NBRC 103803 / 6330) protein is Large-conductance mechanosensitive channel.